A 436-amino-acid chain; its full sequence is Lactonohydrolase oryL (436 aa).

A signal peptide spans 1–27 (MLSYTSHCLQALLGVASLPYRQYQAYS).

Belongs to the SMP-30/CGR1 family.

Its pathway is secondary metabolite biosynthesis. Its function is as follows. Lactonohydrolase; part of the gene cluster that mediates the biosynthesis of oryzines, natural products with an unusual maleidride backbone. The two subunits of the fungal fatty acid synthase oryfasA and oryfasB probably form octenoic acid. This fatty acid is most likely activated by the acyl-CoA ligase oryP to give octenyl-CoA before the citrate synthase-like protein oryE catalyzes condensation with oxaloacetate to form tricarboxylic acid. The next steps of the pathways are conjectural, but a favorite possible route has been proposed, beginning with decarboxylation and concomitant dehydration by the decarboxylase oryM, followed by tautomerization, which may lead to the production of a diene intermediate. Reduction of this diene intermediate could give the known metabolite piliformic acid. On the pathway to oryzine B and oryzine A, however, hydroxylation of the diene by the alpha-ketoglutarate-dependent dioxygenase oryG and lactonisation by the lactonohydrolases oryH or oryL could give oryzine B directly. Finally, enoyl reduction by the dehydrogenase oryD would then convert oryzine B into oryzine A. The protein is Lactonohydrolase oryL of Aspergillus oryzae (strain ATCC 42149 / RIB 40) (Yellow koji mold).